We begin with the raw amino-acid sequence, 320 residues long: o-succinylbenzoate synthase (320 aa).

The active-site Proton donor is lysine 133. Residues aspartate 161, glutamate 190, and aspartate 213 each coordinate Mg(2+). Lysine 235 functions as the Proton acceptor in the catalytic mechanism.

The protein belongs to the mandelate racemase/muconate lactonizing enzyme family. MenC type 1 subfamily. It depends on a divalent metal cation as a cofactor.

The enzyme catalyses (1R,6R)-6-hydroxy-2-succinyl-cyclohexa-2,4-diene-1-carboxylate = 2-succinylbenzoate + H2O. The protein operates within quinol/quinone metabolism; 1,4-dihydroxy-2-naphthoate biosynthesis; 1,4-dihydroxy-2-naphthoate from chorismate: step 4/7. It functions in the pathway quinol/quinone metabolism; menaquinone biosynthesis. Functionally, converts 2-succinyl-6-hydroxy-2,4-cyclohexadiene-1-carboxylate (SHCHC) to 2-succinylbenzoate (OSB). This chain is o-succinylbenzoate synthase, found in Salmonella heidelberg (strain SL476).